A 348-amino-acid polypeptide reads, in one-letter code: sn-glycerol-3-phosphate import ATP-binding protein UgpC 3 (348 aa).

The region spanning 4–234 is the ABC transporter domain; sequence INIIDVKKNY…PASLFVASFI (231 aa). 36–43 provides a ligand contact to ATP; the sequence is GPSGCGKS.

This sequence belongs to the ABC transporter superfamily. sn-glycerol-3-phosphate importer (TC 3.A.1.1.3) family. As to quaternary structure, the complex is composed of two ATP-binding proteins (UgpC), two transmembrane proteins (UgpA and UgpE) and a solute-binding protein (UgpB).

It localises to the cell inner membrane. The catalysed reaction is sn-glycerol 3-phosphate(out) + ATP + H2O = sn-glycerol 3-phosphate(in) + ADP + phosphate + H(+). Its function is as follows. Part of the ABC transporter complex UgpBAEC involved in sn-glycerol-3-phosphate (G3P) import. Responsible for energy coupling to the transport system. The sequence is that of sn-glycerol-3-phosphate import ATP-binding protein UgpC 3 from Rhizobium johnstonii (strain DSM 114642 / LMG 32736 / 3841) (Rhizobium leguminosarum bv. viciae).